A 349-amino-acid polypeptide reads, in one-letter code: Glycerol-3-phosphate dehydrogenase [NAD(+)], cytoplasmic (349 aa).

NAD(+) is bound by residues 10–15, Phe41, and Phe97; that span reads GSGNWG. Residue Lys120 coordinates substrate. Ala153 serves as a coordination point for NAD(+). Ser154 carries the post-translational modification Phosphoserine. Lys204 functions as the Proton acceptor in the catalytic mechanism. Arg269 contacts NAD(+). Residue 269–270 participates in substrate binding; the sequence is RN. An N6-succinyllysine modification is found at Lys289. NAD(+) contacts are provided by Lys296 and Gln298. Tyr326 is modified (phosphotyrosine).

This sequence belongs to the NAD-dependent glycerol-3-phosphate dehydrogenase family. As to quaternary structure, homodimer. As to expression, expressed in liver (at protein level).

It is found in the cytoplasm. The catalysed reaction is sn-glycerol 3-phosphate + NAD(+) = dihydroxyacetone phosphate + NADH + H(+). Inhibited by zinc ions and sulfate. Has glycerol-3-phosphate dehydrogenase activity. The sequence is that of Glycerol-3-phosphate dehydrogenase [NAD(+)], cytoplasmic from Homo sapiens (Human).